Reading from the N-terminus, the 227-residue chain is Cytidylate kinase (227 aa).

12-20 (GPSGVGKGT) lines the ATP pocket.

It belongs to the cytidylate kinase family. Type 1 subfamily.

It localises to the cytoplasm. It carries out the reaction CMP + ATP = CDP + ADP. The enzyme catalyses dCMP + ATP = dCDP + ADP. The sequence is that of Cytidylate kinase from Shewanella denitrificans (strain OS217 / ATCC BAA-1090 / DSM 15013).